The following is a 745-amino-acid chain: 1,4-alpha-glucan branching enzyme GlgB (745 aa).

The Nucleophile role is filled by Asp416. Glu469 functions as the Proton donor in the catalytic mechanism.

It belongs to the glycosyl hydrolase 13 family. GlgB subfamily. As to quaternary structure, monomer.

The catalysed reaction is Transfers a segment of a (1-&gt;4)-alpha-D-glucan chain to a primary hydroxy group in a similar glucan chain.. It participates in glycan biosynthesis; glycogen biosynthesis. Its function is as follows. Catalyzes the formation of the alpha-1,6-glucosidic linkages in glycogen by scission of a 1,4-alpha-linked oligosaccharide from growing alpha-1,4-glucan chains and the subsequent attachment of the oligosaccharide to the alpha-1,6 position. The polypeptide is 1,4-alpha-glucan branching enzyme GlgB (Shewanella sp. (strain MR-7)).